The sequence spans 687 residues: Glycine--tRNA ligase beta subunit (687 aa).

Belongs to the class-II aminoacyl-tRNA synthetase family. As to quaternary structure, tetramer of two alpha and two beta subunits.

The protein resides in the cytoplasm. It catalyses the reaction tRNA(Gly) + glycine + ATP = glycyl-tRNA(Gly) + AMP + diphosphate. The protein is Glycine--tRNA ligase beta subunit of Neisseria gonorrhoeae (strain NCCP11945).